Here is a 360-residue protein sequence, read N- to C-terminus: Phospho-N-acetylmuramoyl-pentapeptide-transferase (360 aa).

10 consecutive transmembrane segments (helical) span residues 18–38 (VFSY…FISL), 73–93 (TMGG…WADL), 94–114 (SNIY…VGFV), 134–154 (YFWQ…IAQG), 168–188 (LLPQ…VGTS), 199–219 (GLAI…AYVT), 239–259 (LVIV…FNTY), 263–283 (VFMG…IAIL), 288–308 (LVLF…ILQV), and 338–358 (VIVR…ATLK).

Belongs to the glycosyltransferase 4 family. MraY subfamily. Mg(2+) is required as a cofactor.

The protein resides in the cell inner membrane. It carries out the reaction UDP-N-acetyl-alpha-D-muramoyl-L-alanyl-gamma-D-glutamyl-meso-2,6-diaminopimeloyl-D-alanyl-D-alanine + di-trans,octa-cis-undecaprenyl phosphate = di-trans,octa-cis-undecaprenyl diphospho-N-acetyl-alpha-D-muramoyl-L-alanyl-D-glutamyl-meso-2,6-diaminopimeloyl-D-alanyl-D-alanine + UMP. The protein operates within cell wall biogenesis; peptidoglycan biosynthesis. Catalyzes the initial step of the lipid cycle reactions in the biosynthesis of the cell wall peptidoglycan: transfers peptidoglycan precursor phospho-MurNAc-pentapeptide from UDP-MurNAc-pentapeptide onto the lipid carrier undecaprenyl phosphate, yielding undecaprenyl-pyrophosphoryl-MurNAc-pentapeptide, known as lipid I. The sequence is that of Phospho-N-acetylmuramoyl-pentapeptide-transferase from Colwellia psychrerythraea (strain 34H / ATCC BAA-681) (Vibrio psychroerythus).